The following is a 403-amino-acid chain: NADH-quinone oxidoreductase subunit D (403 aa).

This sequence belongs to the complex I 49 kDa subunit family. As to quaternary structure, NDH-1 is composed of 14 different subunits. Subunits NuoB, C, D, E, F, and G constitute the peripheral sector of the complex.

The protein resides in the cell membrane. It catalyses the reaction a quinone + NADH + 5 H(+)(in) = a quinol + NAD(+) + 4 H(+)(out). NDH-1 shuttles electrons from NADH, via FMN and iron-sulfur (Fe-S) centers, to quinones in the respiratory chain. The immediate electron acceptor for the enzyme in this species is believed to be a menaquinone. Couples the redox reaction to proton translocation (for every two electrons transferred, four hydrogen ions are translocated across the cytoplasmic membrane), and thus conserves the redox energy in a proton gradient. This is NADH-quinone oxidoreductase subunit D from Amoebophilus asiaticus (strain 5a2).